The sequence spans 256 residues: Imidazole glycerol phosphate synthase subunit HisF (256 aa).

Residues aspartate 11 and aspartate 130 contribute to the active site.

This sequence belongs to the HisA/HisF family. In terms of assembly, heterodimer of HisH and HisF.

Its subcellular location is the cytoplasm. The enzyme catalyses 5-[(5-phospho-1-deoxy-D-ribulos-1-ylimino)methylamino]-1-(5-phospho-beta-D-ribosyl)imidazole-4-carboxamide + L-glutamine = D-erythro-1-(imidazol-4-yl)glycerol 3-phosphate + 5-amino-1-(5-phospho-beta-D-ribosyl)imidazole-4-carboxamide + L-glutamate + H(+). Its pathway is amino-acid biosynthesis; L-histidine biosynthesis; L-histidine from 5-phospho-alpha-D-ribose 1-diphosphate: step 5/9. Its function is as follows. IGPS catalyzes the conversion of PRFAR and glutamine to IGP, AICAR and glutamate. The HisF subunit catalyzes the cyclization activity that produces IGP and AICAR from PRFAR using the ammonia provided by the HisH subunit. The sequence is that of Imidazole glycerol phosphate synthase subunit HisF from Cupriavidus pinatubonensis (strain JMP 134 / LMG 1197) (Cupriavidus necator (strain JMP 134)).